The chain runs to 2605 residues: Protein ABERRANT POLLEN TRANSMISSION 1 (2605 aa).

Positions 1 to 43 are cleaved as a signal peptide; sequence MMLGLVQLLVGFVVAWEAVELVLRHGLLLSVFKLAILAALAAA. Residues 137-158 are disordered; sequence STNKKKPAPRKPISTTTAKAKG. N-linked (GlcNAc...) asparagine glycans are attached at residues Asn232, Asn320, Asn348, Asn516, Asn587, Asn628, Asn696, Asn779, Asn1171, Asn1318, and Asn1459. The interval 305–326 is disordered; the sequence is SASTVAEQKDEPSVDNKSAARS. Basic and acidic residues predominate over residues 311–326; it reads EQKDEPSVDNKSAARS. Residues 1761–1818 form a disordered region; it reads MSKDGALSSVSSTSQPSEPQQIKSSESPPSNGSGKPDLTSSSENALKRSNNSDSEEEG. The segment covering 1768–1781 has biased composition (low complexity); that stretch reads SSVSSTSQPSEPQQ. The segment covering 1782-1812 has biased composition (polar residues); that stretch reads IKSSESPPSNGSGKPDLTSSSENALKRSNNS. Asn1791, Asn1810, Asn2003, Asn2280, and Asn2291 each carry an N-linked (GlcNAc...) asparagine glycan. Disordered stretches follow at residues 2269-2312 and 2332-2361; these read VSTT…SSFD and EGQT…REDK. The span at 2281–2300 shows a compositional bias: polar residues; it reads TSVAETNSPNNQSSKETTFA. Composition is skewed to basic and acidic residues over residues 2303 to 2312 and 2343 to 2361; these read PELRRTSSFD and DAAK…REDK. Asn2468 and Asn2564 each carry an N-linked (GlcNAc...) asparagine glycan. Residues 2574–2605 form a disordered region; the sequence is TELEVAELPPRAPGYNTDSSSDSSSAETSPKD.

The protein belongs to the SABRE family. In terms of tissue distribution, mature pollen-specific.

The protein resides in the secreted. Its subcellular location is the golgi apparatus. Functionally, may be involved in membrane trafficking. Required for tip growth in pollen tubes and root hairs. The protein is Protein ABERRANT POLLEN TRANSMISSION 1 of Zea mays (Maize).